Here is a 150-residue protein sequence, read N- to C-terminus: Interferon antagonist OPG027 (150 aa).

Belongs to the orthopoxvirus OPG027 family.

Functionally, inhibits antiviral activity induced by type I interferons. Does not block signal transduction of IFN, but is important to counteract the host antiviral state induced by a pre-treatment with IFN. The polypeptide is Interferon antagonist OPG027 (OPG027) (Vaccinia virus (strain Ankara) (VACV)).